Reading from the N-terminus, the 76-residue chain is Proteolipid protein 2 (76 aa).

Residues 1–60 (ISGPWSDFFRALGAVILYLMTSIVVLVERGNNSKGAAGVLGLCAAGLFGYDAYITFPSGT) form the MARVEL domain. A helical transmembrane segment spans residues 8 to 28 (FFRALGAVILYLMTSIVVLVE). Asparagine 31 is a glycosylation site (N-linked (GlcNAc...) asparagine). The helical transmembrane segment at 36–56 (AAGVLGLCAAGLFGYDAYITF) threads the bilayer.

Its subcellular location is the membrane. Its function is as follows. May play a role in cell differentiation in the intestinal epithelium. The chain is Proteolipid protein 2 (PLP2) from Ovis aries (Sheep).